Reading from the N-terminus, the 215-residue chain is Heart- and neural crest derivatives-expressed protein 1 (215 aa).

Disordered stretches follow at residues 53–109 (APDF…RTES) and 169–202 (VDGGRESKRKRELQQHEGFPPALGPGEKRIKGRT). The segment covering 65–75 (AAAAAATYGPD) has biased composition (low complexity). The span at 92–104 (LGRRKGSGPKKER) shows a compositional bias: basic residues. A bHLH domain is found at 94-146 (RRKGSGPKKERRRTESINSAFAELRECIPNVPADTKLSKIKTLRLATSYIAYL). Residue Thr107 is modified to Phosphothreonine; by PLK4. Position 109 is a phosphoserine; by PLK4 (Ser109).

In terms of assembly, efficient DNA binding requires dimerization with another bHLH protein. Forms homodimers and heterodimers with TCF3 gene products E12 and E47, HAND2 and HEY1, HEY2 and HEYL (hairy-related transcription factors). Interacts with MDFIC. Interacts with SOX15; the interaction enhances HAND1-induced differentiation of trophoblast giant cells. Post-translationally, phosphorylation by PLK4 disrupts the interaction with MDFIC and leads to translocation into the nucleoplasm, allowing dimerization and transcription factor activity.

Its subcellular location is the nucleus. The protein localises to the nucleoplasm. The protein resides in the nucleolus. Its function is as follows. Transcription factor that plays an essential role in both trophoblast giant cell differentiation and in cardiac morphogenesis. Binds the DNA sequence 5'-NRTCTG-3' (non-canonical E-box). Acts as a transcriptional repressor of SOX15. In the adult, could be required for ongoing expression of cardiac-specific genes. This chain is Heart- and neural crest derivatives-expressed protein 1 (HAND1), found in Oryctolagus cuniculus (Rabbit).